The sequence spans 121 residues: Large ribosomal subunit protein uL18 (121 aa).

Positions Met1–Val22 are enriched in basic residues. Residues Met1–Ala23 are disordered.

The protein belongs to the universal ribosomal protein uL18 family. In terms of assembly, part of the 50S ribosomal subunit; part of the 5S rRNA/L5/L18/L25 subcomplex. Contacts the 5S and 23S rRNAs.

In terms of biological role, this is one of the proteins that bind and probably mediate the attachment of the 5S RNA into the large ribosomal subunit, where it forms part of the central protuberance. This chain is Large ribosomal subunit protein uL18, found in Syntrophomonas wolfei subsp. wolfei (strain DSM 2245B / Goettingen).